The primary structure comprises 236 residues: Pyridoxine 5'-phosphate synthase (236 aa).

Residue asparagine 6 participates in 3-amino-2-oxopropyl phosphate binding. Aspartate 8 to histidine 9 contacts 1-deoxy-D-xylulose 5-phosphate. Arginine 17 is a binding site for 3-amino-2-oxopropyl phosphate. The active-site Proton acceptor is histidine 42. The 1-deoxy-D-xylulose 5-phosphate site is built by arginine 44 and histidine 49. The Proton acceptor role is filled by glutamate 69. Threonine 99 is a binding site for 1-deoxy-D-xylulose 5-phosphate. Histidine 190 acts as the Proton donor in catalysis. 3-amino-2-oxopropyl phosphate contacts are provided by residues glycine 191 and glycine 212–histidine 213.

Belongs to the PNP synthase family. Homooctamer; tetramer of dimers.

Its subcellular location is the cytoplasm. It carries out the reaction 3-amino-2-oxopropyl phosphate + 1-deoxy-D-xylulose 5-phosphate = pyridoxine 5'-phosphate + phosphate + 2 H2O + H(+). The protein operates within cofactor biosynthesis; pyridoxine 5'-phosphate biosynthesis; pyridoxine 5'-phosphate from D-erythrose 4-phosphate: step 5/5. Catalyzes the complicated ring closure reaction between the two acyclic compounds 1-deoxy-D-xylulose-5-phosphate (DXP) and 3-amino-2-oxopropyl phosphate (1-amino-acetone-3-phosphate or AAP) to form pyridoxine 5'-phosphate (PNP) and inorganic phosphate. This Chloroherpeton thalassium (strain ATCC 35110 / GB-78) protein is Pyridoxine 5'-phosphate synthase.